Consider the following 306-residue polypeptide: D-alanine--D-alanine ligase (306 aa).

The ATP-grasp domain occupies Lys101 to Met303. Val134 to Thr189 provides a ligand contact to ATP. Residues Asp257, Glu270, and Asn272 each contribute to the Mg(2+) site.

It belongs to the D-alanine--D-alanine ligase family. Mg(2+) is required as a cofactor. It depends on Mn(2+) as a cofactor.

The protein localises to the cytoplasm. The catalysed reaction is 2 D-alanine + ATP = D-alanyl-D-alanine + ADP + phosphate + H(+). The protein operates within cell wall biogenesis; peptidoglycan biosynthesis. Its function is as follows. Cell wall formation. This Yersinia pseudotuberculosis serotype O:1b (strain IP 31758) protein is D-alanine--D-alanine ligase.